The sequence spans 269 residues: Cell wall protein TIR3 (269 aa).

Positions 1-22 (MSFTKIAALLAVAAASTQLVSA) are cleaved as a signal peptide. The disordered stretch occupies residues 128-242 (SGSESATASS…TNSSSSATSK (115 aa)). Residue Asn-234 is glycosylated (N-linked (GlcNAc...) asparagine). Gly-245 carries GPI-anchor amidated glycine lipidation. Residues 246-269 (AAMDMGFFSAGVGAAIAGAAAMLL) constitute a propeptide, removed in mature form.

It belongs to the SRP1/TIP1 family. Post-translationally, extensively O-glycosylated. The GPI-anchor is attached to the protein in the endoplasmic reticulum and serves to target the protein to the cell surface. There, the glucosamine-inositol phospholipid moiety is cleaved off and the GPI-modified mannoprotein is covalently attached via its lipidless GPI glycan remnant to the 1,6-beta-glucan of the outer cell wall layer.

It is found in the secreted. It localises to the cell wall. The protein localises to the membrane. Its function is as follows. Component of the cell wall. Required for anaerobic growth. The polypeptide is Cell wall protein TIR3 (TIR3) (Saccharomyces cerevisiae (strain ATCC 204508 / S288c) (Baker's yeast)).